We begin with the raw amino-acid sequence, 1012 residues long: MKTTRRSFLKLVGVSVVGLSLGQLGFDLEDAQAYAVKLKIEGAKEVGTVCPFCSVCCQVIAYVRNGKLVSTEGDPDFPVNEGALCAKGAALFSMYTNPHRLTKPLYRAPHSDKWVEKDWDWTLNQIARRVKDARDKDMILKNDKGQTVNRLESIFMMGTSHASNEECAVIHQAMRGLGVVHMDHQARVUHSPTVAALAESFGRGAMTNHWIDIKNTDAVLIIGSNAAEHHPVAFKWIMRARDNGAVLMHVDPKFSRTSARCDFHVPLRSGTDIAFLGGMVNHIIAKDLYFKDYVANYTNAAFVVGKDYAFEDGIFSGYDPKTRTYDRSKWEFEKGPDGGPVMDPTLKNERCVFNLMKKHYERYTLKNVSDVTGVSEENLLRVYDAFCATGRPDKAGTILYALGWTQHTVGVQNIRTSTLIQLLLGNIGVAGGGINALRGEPNVQGSTDHALLYHILPGYNAMPVAQWQTLADYNKANTPVTTLKNSANWWSNRPKYVASLLKGWFGDAATPENDFCYEYLPKLEKGEDYSYMYVMDRMYHGKLKGGFIFGVNPMNSFPNTNKMRAALDKLDWLVCSELHNSETTDNWKRPGVDPKACKTEVFLLPSAHRVEKAGTISNSGRWLQWFDKAVEPGQARNFADIFVPLVNKIRALYKAEGGTLPDPVLKLHWTDKFDPEEWTRRINGFFWADTKVGDKEYKRGQLVPAFGQLKDDGSTSSLNWLYTGSYTEEDGNKSKRRDARQTPMQANIGLFPNWSWCWPVNRRILYNRASVDVNGKPWNPKKAVIEWDGAKWVGDVPDGPWPPMADKEKGKLPFIMNKDGFAQFYGTGRMDGPFPEHYEPAETPLDSHPFSKQLSSPVYKFHTSDMDQIAKAADPKYPIVLTTYSLTEHWCGGGETRNVPNLLETEPQLYIEMSPELAEEKGIKNGDGVIVESIRGRAEAIAMVTVRIRPFTVMGKTVHLVGMPFAYGWTTPKCGDSTNRLTVGAYDPNTTIPESKACLVNVRKADKLTEIA.

A signal peptide (tat-type signal) is located at residues 1–33 (MKTTRRSFLKLVGVSVVGLSLGQLGFDLEDAQA). The 4Fe-4S Mo/W bis-MGD-type domain maps to 43-99 (AKEVGTVCPFCSVCCQVIAYVRNGKLVSTEGDPDFPVNEGALCAKGAALFSMYTNPH). Cys-50, Cys-53, Cys-57, and Cys-85 together coordinate [4Fe-4S] cluster. Position 189 (Sec-189) interacts with W-bis(molybdopterin guanine dinucleotide). A non-standard amino acid (selenocysteine) is located at residue Sec-189. Thr-389, Arg-391, Lys-394, Leu-424, and Asn-426 together coordinate Ca(2+).

Belongs to the prokaryotic molybdopterin-containing oxidoreductase family. In terms of assembly, heterotrimer of cytochrome c3 FDH2C and formate dehydrogenase FDH2 alpha and beta subunits that forms the FdhABC(3) complex. [4Fe-4S] cluster serves as cofactor. It depends on W-bis(molybdopterin guanine dinucleotide) as a cofactor. Predicted to be exported by the Tat system. The position of the signal peptide cleavage has not been experimentally proven.

It is found in the periplasm. The catalysed reaction is 2 Fe(III)-[cytochrome c553] + formate = 2 Fe(II)-[cytochrome c553] + CO2 + H(+). In terms of biological role, alpha chain of the formate dehydrogenase (FDH) that catalyzes the reversible two-electron oxidation of formate to carbon dioxide. The alpha subunit of formate dehydrogenase forms the active site. In Nitratidesulfovibrio vulgaris (strain ATCC 29579 / DSM 644 / CCUG 34227 / NCIMB 8303 / VKM B-1760 / Hildenborough) (Desulfovibrio vulgaris), this protein is Formate dehydrogenase 2 subunit alpha (cytochrome c-553).